Consider the following 60-residue polypeptide: uncharacterized protein (60 aa).

Positions 27–50 are disordered; the sequence is VKNNNNNNNNNNNNNNNNNNNNNK. Over residues 29–49 the composition is skewed to low complexity; sequence NNNNNNNNNNNNNNNNNNNNN.

This is an uncharacterized protein from Dictyostelium discoideum (Social amoeba).